The sequence spans 311 residues: Ribosomal RNA small subunit methyltransferase H (311 aa).

S-adenosyl-L-methionine is bound by residues 32–34 (AGH), Asp52, Phe79, Asp100, and Gln107. Residues 287–311 (TASQEELEENNRARSAKLRIAEKRK) form a disordered region. Residues 300 to 311 (RSAKLRIAEKRK) are compositionally biased toward basic residues.

It belongs to the methyltransferase superfamily. RsmH family.

It is found in the cytoplasm. The enzyme catalyses cytidine(1402) in 16S rRNA + S-adenosyl-L-methionine = N(4)-methylcytidine(1402) in 16S rRNA + S-adenosyl-L-homocysteine + H(+). Specifically methylates the N4 position of cytidine in position 1402 (C1402) of 16S rRNA. This chain is Ribosomal RNA small subunit methyltransferase H, found in Bacillus subtilis (strain 168).